A 362-amino-acid polypeptide reads, in one-letter code: Isopentenyl-diphosphate delta-isomerase (362 aa).

Position 6–7 (6–7 (RK)) interacts with substrate. Residues 65–67 (SIT), Ser-95, and Asn-124 contribute to the FMN site. Position 95 to 97 (95 to 97 (SQR)) interacts with substrate. Substrate is bound at residue Gln-158. Position 159 (Glu-159) interacts with Mg(2+). Residues Lys-189, Thr-219, 269 to 271 (GVR), and 290 to 291 (AL) each bind FMN.

This sequence belongs to the IPP isomerase type 2 family. Homooctamer. Dimer of tetramers. It depends on FMN as a cofactor. Requires NADPH as cofactor. Mg(2+) serves as cofactor.

Its subcellular location is the cytoplasm. The enzyme catalyses isopentenyl diphosphate = dimethylallyl diphosphate. Involved in the biosynthesis of isoprenoids. Catalyzes the 1,3-allylic rearrangement of the homoallylic substrate isopentenyl (IPP) to its allylic isomer, dimethylallyl diphosphate (DMAPP). The polypeptide is Isopentenyl-diphosphate delta-isomerase (Methanococcoides burtonii (strain DSM 6242 / NBRC 107633 / OCM 468 / ACE-M)).